The sequence spans 211 residues: Urease accessory protein UreE (211 aa).

The tract at residues 134 to 211 (FDPEGGAYAP…DHHGHGHEHK (78 aa)) is disordered. Basic and acidic residues predominate over residues 147–202 (PSHDHAGHDHAHDSHAHHDHDHGKHAQHDHGKHDHAHHDHAAHDDHHVHDEHCGHD).

It belongs to the UreE family.

The protein localises to the cytoplasm. Involved in urease metallocenter assembly. Binds nickel. Probably functions as a nickel donor during metallocenter assembly. The chain is Urease accessory protein UreE from Rhodopseudomonas palustris (strain BisB18).